The chain runs to 240 residues: Uridylate kinase (240 aa).

Position 13 to 16 (13 to 16 (KLSG)) interacts with ATP. Positions 21-26 (GDKGFG) are involved in allosteric activation by GTP. Residue Gly-55 coordinates UMP. The ATP site is built by Gly-56 and Arg-60. UMP-binding positions include Asp-75 and 136-143 (IGNPYFST). ATP is bound by residues Asn-164, Tyr-170, and Asp-173.

This sequence belongs to the UMP kinase family. In terms of assembly, homohexamer.

The protein localises to the cytoplasm. It carries out the reaction UMP + ATP = UDP + ADP. Its pathway is pyrimidine metabolism; CTP biosynthesis via de novo pathway; UDP from UMP (UMPK route): step 1/1. With respect to regulation, allosterically activated by GTP. Inhibited by UTP. Its function is as follows. Catalyzes the reversible phosphorylation of UMP to UDP. This Staphylococcus haemolyticus (strain JCSC1435) protein is Uridylate kinase.